Here is a 536-residue protein sequence, read N- to C-terminus: Phosphoenolpyruvate carboxykinase (ATP) (536 aa).

Arg-61, Tyr-195, and Lys-201 together coordinate substrate. ATP-binding positions include Lys-201, His-220, and Gly-236–Thr-244. Residues Lys-201 and His-220 each contribute to the Mn(2+) site. Asp-257 contacts Mn(2+). 3 residues coordinate ATP: Glu-285, Arg-322, and Thr-447. Arg-322 contributes to the substrate binding site.

Belongs to the phosphoenolpyruvate carboxykinase (ATP) family. Mn(2+) serves as cofactor.

Its subcellular location is the cytoplasm. The enzyme catalyses oxaloacetate + ATP = phosphoenolpyruvate + ADP + CO2. It functions in the pathway carbohydrate biosynthesis; gluconeogenesis. Involved in the gluconeogenesis. Catalyzes the conversion of oxaloacetate (OAA) to phosphoenolpyruvate (PEP) through direct phosphoryl transfer between the nucleoside triphosphate and OAA. This Rhizobium rhizogenes (strain K84 / ATCC BAA-868) (Agrobacterium radiobacter) protein is Phosphoenolpyruvate carboxykinase (ATP).